The sequence spans 418 residues: Vacuole membrane protein HFL1 (418 aa).

The Extracellular portion of the chain corresponds to 1–5; the sequence is MENKL. Residues 6-26 form a helical membrane-spanning segment; it reads LCWWLYWPCVYSSIIATIISF. Residues 27-43 lie on the Cytoplasmic side of the membrane; sequence YTITRHLLNYRKPYEQR. The helical transmembrane segment at 44-64 threads the bilayer; sequence LSIRILLLVPIFSVSCASGII. At 65–78 the chain is on the extracellular side; sequence KPEAAQFYVDPIRE. The chain crosses the membrane as a helical span at residues 79–99; sequence FYEAFVIYTFFTFLTLLLGGE. Residues 100–141 are Cytoplasmic-facing; the sequence is RNIITVLSLNHAPTRHPIPLIGKICKPIDLSDPFDFLFVKKG. A helical membrane pass occupies residues 142–162; that stretch reads ILQYVWFKPFYCFGTLICSAW. Over 163–168 the chain is Extracellular; that stretch reads KLPKFE. The chain crosses the membrane as a helical span at residues 169–189; the sequence is IFLNVFYNISVTWSLYSLALF. Over 190 to 205 the chain is Cytoplasmic; the sequence is WKCLYPELTPYKPWLK. The chain crosses the membrane as a helical span at residues 206-226; it reads FLCVKLIIFASYWQSIIIQGL. At 227-246 the chain is on the extracellular side; the sequence is VVTGKLGTGNQDRTSGYVYK. The chain crosses the membrane as a helical span at residues 247–267; the sequence is NGLLCIEMVPFAILHAVAFPW. Over 268 to 418 the chain is Cytoplasmic; that stretch reads NKYTAFSIPY…DVQSRSSMAC (151 aa). An ATG8-interacting region region spans residues 379–402; sequence RTFPEDPNYPVVHDYTMGHRYSRS.

Belongs to the TMEM184 family. As to quaternary structure, interacts with ATG8.

Its subcellular location is the vacuole membrane. Vacuole membrane protein that recruits ATG8 to facilitate the degradation of vacuolar integral membrane proteins during early-stationary vacuole turnover (EVT) when cells enter stationary phase. This is Vacuole membrane protein HFL1 from Saccharomyces cerevisiae (strain ATCC 204508 / S288c) (Baker's yeast).